We begin with the raw amino-acid sequence, 403 residues long: Myeloid cell surface antigen CD33 (403 aa).

Positions Met1 to Ala16 are cleaved as a signal peptide. Positions Gln17–Val120 constitute an Ig-like V-type domain. The Extracellular segment spans residues Asp18–Glu240. Disulfide bonds link Cys36-Cys169, Cys41-Cys100, and Cys163-Cys212. N-linked (GlcNAc...) asparagine glycosylation is present at Asn110. Arg118 contributes to the N-acetylneuraminate binding site. Residues Pro145 to Gln228 form the Ig-like C2-type domain. N-linked (GlcNAc...) asparagine glycosylation occurs at Asn160. The N-linked (GlcNAc...) asparagine glycan is linked to Asn230. The helical transmembrane segment at Leu241 to Phe267 threads the bilayer. Residues Cys268–Ser403 lie on the Cytoplasmic side of the membrane.

This sequence belongs to the immunoglobulin superfamily. SIGLEC (sialic acid binding Ig-like lectin) family. Homodimer; disulfide-linked. Interacts with PTPN6/SHP-1 and PTPN11/SHP-2 upon phosphorylation. Interacts with C1QA (via C-terminus); this interaction activates CD33 inhibitory motifs. Post-translationally, glycosylated. Phosphorylation is involved in binding to PTPN6 and PTPN11. As to expression, expressed on myeloid precursors in the bone marrow. In the peripheral blood, mostly expressed on granulocytes.

It localises to the cell membrane. Sialic-acid-binding immunoglobulin-like lectin (Siglec) that plays a role in mediating cell-cell interactions and in maintaining immune cells in a resting state. Preferentially binds sialic acid to the short O-linked glycans of certain mucins. The protein is Myeloid cell surface antigen CD33 (Cd33) of Mus musculus (Mouse).